The following is a 106-amino-acid chain: Testis-specific basic protein Y 2 (106 aa).

Belongs to the VCX/VCY family. Interacts with MAP1S. Interacts with UBE3A (via HECT domain). Expressed exclusively in testis. Expressed in ejaculated spermatozoa of germ cell. Expressed in the nuclei of spermatogonia, spermatocytes, and round spermatids, except elongated spermatids (at protein level).

The sequence is that of Testis-specific basic protein Y 2 (BPY2) from Homo sapiens (Human).